Reading from the N-terminus, the 286-residue chain is Beta-lactamase SHV-2 (286 aa).

An N-terminal signal peptide occupies residues Met-1–Ala-21. Residue Ser-66 is the Acyl-ester intermediate of the active site. Cys-73 and Cys-119 form a disulfide bridge. Residue Glu-164 is the Proton acceptor of the active site. Lys-230–Gly-232 is a substrate binding site.

The protein belongs to the class-A beta-lactamase family.

It catalyses the reaction a beta-lactam + H2O = a substituted beta-amino acid. Functionally, this enzyme hydrolyzes cefotaxime, ceftazidime and other broad spectrum cephalosporins. This is Beta-lactamase SHV-2 (bla) from Escherichia coli.